We begin with the raw amino-acid sequence, 545 residues long: Alpha-galactosidase A (545 aa).

The signal sequence occupies residues 1 to 31 (MIQGLESIMNQGTKRILLAATLAATPWQVYG). Cysteines 54 and 86 form a disulfide. N-linked (GlcNAc...) asparagine glycans are attached at residues Asn57, Asn95, Asn101, and Asn131. Residues Cys134 and Cys164 are joined by a disulfide bond. The active-site Nucleophile is Asp162. Asn211 carries an N-linked (GlcNAc...) asparagine glycan. Catalysis depends on Asp220, which acts as the Proton donor. N-linked (GlcNAc...) asparagine glycans are attached at residues Asn363 and Asn444. Residues 421 to 518 (CSSVVPTGLV…KNAKTDGCLT (98 aa)) form the Ricin B-type lectin domain. 2 disulfide bridges follow: Cys438-Cys452 and Cys477-Cys490.

This sequence belongs to the glycosyl hydrolase 27 family. A C-terminal Ser/Thr-rich region may provide possible sites for O-glycosylation.

Its subcellular location is the secreted. It catalyses the reaction Hydrolysis of terminal, non-reducing alpha-D-galactose residues in alpha-D-galactosides, including galactose oligosaccharides, galactomannans and galactolipids.. Hydrolyzes a variety of simple alpha-D-galactoside as well as more complex molecules such as oligosaccharides and polysaccharides. This chain is Alpha-galactosidase A (aglA), found in Aspergillus niger.